We begin with the raw amino-acid sequence, 133 residues long: Small ribosomal subunit protein uS9 (133 aa).

It belongs to the universal ribosomal protein uS9 family.

The polypeptide is Small ribosomal subunit protein uS9 (Ureaplasma parvum serovar 3 (strain ATCC 700970)).